The following is a 610-amino-acid chain: Zinc finger protein 823 (610 aa).

A KRAB domain is found at 4–97 (VAFEDVAVNF…VNKNTPRVNP (94 aa)). 10 C2H2-type zinc fingers span residues 164–186 (FDCKECAKTFSSLGNLRRHMAAH), 192–214 (YKCKLCGKAFVWPSLFHLHERTH), 220–242 (YECKQCSKAFPFYSSYLRHERIH), 248–270 (YECKQCSKAFPDYSTYLRHERTH), 276–298 (YKCTQCGKAFSCYYYTRLHERTH), 304–326 (YACKQCGKTFYHHTSFRRHMIRH), 332–354 (HKCKICGKGFDCPSSVRNHETTH), 360–382 (YECKQCGKVLSHSSSFRSHMITH), 388–410 (QKCKICGKAFGCPSLFQRHERTH), and 416–438 (YQCKQCGKAFSLAGSLRRHEATH). The C2H2-type 11; atypical zinc-finger motif lies at 444–465 (YKCQCGKAFSDLSSFQNHETTH). 5 C2H2-type zinc fingers span residues 471–493 (YECKECGKAFSCFKYLSQHKRTH), 499–521 (YECKTCRKAFSHFSNLKVHERIH), 527–549 (YECKECGKAFSWLTCLLRHERIH), 555–577 (YECLQCGKAFTRSRFLRGHEKTH), and 583–605 (YECKECGKALSSLRSLHRHKRTH).

This sequence belongs to the krueppel C2H2-type zinc-finger protein family.

The protein resides in the nucleus. May be involved in transcriptional regulation. The sequence is that of Zinc finger protein 823 (ZNF823) from Homo sapiens (Human).